The chain runs to 436 residues: Protein 60A (436 aa).

The N-terminal stretch at Met-1–Gln-27 is a signal peptide. The propeptide occupies Ser-28–Lys-317. N-linked (GlcNAc...) asparagine glycans are attached at residues Asn-102, Asn-114, Asn-217, and Asn-229. A disordered region spans residues Ile-293 to Asn-322. Over residues Thr-301–Ser-316 the composition is skewed to basic residues. 3 disulfides stabilise this stretch: Cys-335/Cys-401, Cys-364/Cys-433, and Cys-368/Cys-435. The N-linked (GlcNAc...) asparagine glycan is linked to Asn-377.

The protein belongs to the TGF-beta family. As to quaternary structure, homodimer; disulfide-linked.

The protein localises to the secreted. In Drosophila virilis (Fruit fly), this protein is Protein 60A (gbb).